Reading from the N-terminus, the 474-residue chain is Replication factor C large subunit (474 aa).

45–52 serves as a coordination point for ATP; it reads GPPGCGKT. Over residues 415-468 the composition is skewed to basic and acidic residues; sequence DKKTNNKKGKENKTKNTTKKIKEIKETPKKEEVKEPKKQIEKQKSEKKEPKKQM. Positions 415-474 are disordered; the sequence is DKKTNNKKGKENKTKNTTKKIKEIKETPKKEEVKEPKKQIEKQKSEKKEPKKQMTLESFF.

The protein belongs to the activator 1 small subunits family. RfcL subfamily. As to quaternary structure, heteromultimer composed of small subunits (RfcS) and large subunits (RfcL).

Functionally, part of the RFC clamp loader complex which loads the PCNA sliding clamp onto DNA. This is Replication factor C large subunit from Methanococcus aeolicus (strain ATCC BAA-1280 / DSM 17508 / OCM 812 / Nankai-3).